Reading from the N-terminus, the 225-residue chain is MOB-like protein phocein (225 aa).

Positions 92, 97, 110, 113, 119, 127, 169, and 174 each coordinate Zn(2+).

It belongs to the MOB1/phocein family. As to quaternary structure, binds STRN4. Interacts with DNM1 and EPS15. Interacts with nucleoside diphosphate kinase. Interacts with CTTNBP2. Interacts with CTTNBP2NL. Part of the core of STRIPAK complexes composed of PP2A catalytic and scaffolding subunits, the striatins (PP2A regulatory subunits), the striatin-associated proteins MOB4, STRIP1 and STRIP2, PDCD10 and members of the STE20 kinases, such as STK24 and STK26. In terms of processing, phosphorylated on serine residues. As to expression, highly expressed in adrenal gland, spinal cord, brain and cerebellum. Detected at lower levels in heart and skeletal muscle, and at very low levels in spleen, liver and intestine.

It localises to the cytoplasm. Its subcellular location is the membrane. The protein resides in the golgi apparatus. It is found in the golgi stack membrane. Functionally, part of the striatin-interacting phosphatase and kinase (STRIPAK) complexes. STRIPAK complexes have critical roles in protein (de)phosphorylation and are regulators of multiple signaling pathways including Hippo, MAPK, nuclear receptor and cytoskeleton remodeling. Different types of STRIPAK complexes are involved in a variety of biological processes such as cell growth, differentiation, apoptosis, metabolism and immune regulation. The protein is MOB-like protein phocein (Mob4) of Rattus norvegicus (Rat).